Here is a 636-residue protein sequence, read N- to C-terminus: 1-deoxy-D-xylulose-5-phosphate synthase (636 aa).

Thiamine diphosphate contacts are provided by residues histidine 75 and 116-118 (AHS). Residue aspartate 147 coordinates Mg(2+). Thiamine diphosphate is bound by residues 148 to 149 (GA), asparagine 177, tyrosine 288, and glutamate 370. Asparagine 177 contacts Mg(2+).

The protein belongs to the transketolase family. DXPS subfamily. In terms of assembly, homodimer. The cofactor is Mg(2+). Thiamine diphosphate serves as cofactor.

The enzyme catalyses D-glyceraldehyde 3-phosphate + pyruvate + H(+) = 1-deoxy-D-xylulose 5-phosphate + CO2. It participates in metabolic intermediate biosynthesis; 1-deoxy-D-xylulose 5-phosphate biosynthesis; 1-deoxy-D-xylulose 5-phosphate from D-glyceraldehyde 3-phosphate and pyruvate: step 1/1. Catalyzes the acyloin condensation reaction between C atoms 2 and 3 of pyruvate and glyceraldehyde 3-phosphate to yield 1-deoxy-D-xylulose-5-phosphate (DXP). This chain is 1-deoxy-D-xylulose-5-phosphate synthase, found in Ralstonia pickettii (strain 12J).